Reading from the N-terminus, the 512-residue chain is Cytochrome P450 98A1 (512 aa).

The chain crosses the membrane as a helical span at residues 3–23 (ASLLLSVALAVVLIPLSLALL). Heme is bound at residue cysteine 441.

It belongs to the cytochrome P450 family. The cofactor is heme.

The protein localises to the membrane. This is Cytochrome P450 98A1 (CYP98A1) from Sorghum bicolor (Sorghum).